A 440-amino-acid polypeptide reads, in one-letter code: Ribosomal protein uS12 methylthiotransferase RimO (440 aa).

Residues 8–124 enclose the MTTase N-terminal domain; that stretch reads TSVFLLSLGC…VLDALGARYH (117 aa). Residues C17, C53, C87, C148, C152, and C155 each coordinate [4Fe-4S] cluster. A Radical SAM core domain is found at 134–363; sequence LTPPHSSYLK…MELQEEIARK (230 aa). The TRAM domain maps to 366 to 437; the sequence is EAFVGSLMTV…AYELHGTVES (72 aa).

It belongs to the methylthiotransferase family. RimO subfamily. It depends on [4Fe-4S] cluster as a cofactor.

The protein resides in the cytoplasm. The catalysed reaction is L-aspartate(89)-[ribosomal protein uS12]-hydrogen + (sulfur carrier)-SH + AH2 + 2 S-adenosyl-L-methionine = 3-methylsulfanyl-L-aspartate(89)-[ribosomal protein uS12]-hydrogen + (sulfur carrier)-H + 5'-deoxyadenosine + L-methionine + A + S-adenosyl-L-homocysteine + 2 H(+). Catalyzes the methylthiolation of an aspartic acid residue of ribosomal protein uS12. In Chlorobium luteolum (strain DSM 273 / BCRC 81028 / 2530) (Pelodictyon luteolum), this protein is Ribosomal protein uS12 methylthiotransferase RimO.